The chain runs to 453 residues: DNA repair protein RadA (453 aa).

The C4-type zinc finger occupies C10 to C27. G95–S102 is an ATP binding site. The RadA KNRFG motif motif lies at K251 to G255. The segment at D350–S453 is lon-protease-like.

It belongs to the RecA family. RadA subfamily.

DNA-dependent ATPase involved in processing of recombination intermediates, plays a role in repairing DNA breaks. Stimulates the branch migration of RecA-mediated strand transfer reactions, allowing the 3' invading strand to extend heteroduplex DNA faster. Binds ssDNA in the presence of ADP but not other nucleotides, has ATPase activity that is stimulated by ssDNA and various branched DNA structures, but inhibited by SSB. Does not have RecA's homology-searching function. The sequence is that of DNA repair protein RadA from Streptococcus pyogenes serotype M1.